Consider the following 532-residue polypeptide: FRIGIDA-like protein 4a (532 aa).

A disordered region spans residues 406–432; it reads KTEKRKPAAVPANKRTRASYNGPMPPA.

This sequence belongs to the Frigida family. In terms of tissue distribution, expressed in leaves, shoot apex, flowers and during seed development.

In Arabidopsis thaliana (Mouse-ear cress), this protein is FRIGIDA-like protein 4a (FRL4A).